A 298-amino-acid polypeptide reads, in one-letter code: uncharacterized protein (298 aa).

Residues 1 to 17 (MLTKSAENKRNRKDDSM) show a composition bias toward basic and acidic residues. Residues 1 to 22 (MLTKSAENKRNRKDDSMRPGQQ) are disordered. The region spanning 167–227 (NKELTGTVYR…EDGSVNLSLL (61 aa)) is the S1 motif domain.

This is an uncharacterized protein from Bacillus subtilis (strain 168).